Here is a 492-residue protein sequence, read N- to C-terminus: N-succinylglutamate 5-semialdehyde dehydrogenase (492 aa).

220–225 serves as a coordination point for NAD(+); the sequence is GSASTG. Catalysis depends on residues Glu243 and Cys277.

This sequence belongs to the aldehyde dehydrogenase family. AstD subfamily.

It catalyses the reaction N-succinyl-L-glutamate 5-semialdehyde + NAD(+) + H2O = N-succinyl-L-glutamate + NADH + 2 H(+). It participates in amino-acid degradation; L-arginine degradation via AST pathway; L-glutamate and succinate from L-arginine: step 4/5. In terms of biological role, catalyzes the NAD-dependent reduction of succinylglutamate semialdehyde into succinylglutamate. The polypeptide is N-succinylglutamate 5-semialdehyde dehydrogenase (Salmonella paratyphi C (strain RKS4594)).